Consider the following 266-residue polypeptide: tRNA dimethylallyltransferase (266 aa).

Belongs to the IPP transferase family. As to quaternary structure, monomer. The cofactor is Mg(2+).

The enzyme catalyses adenosine(37) in tRNA + dimethylallyl diphosphate = N(6)-dimethylallyladenosine(37) in tRNA + diphosphate. In terms of biological role, catalyzes the transfer of a dimethylallyl group onto the adenine at position 37 in tRNAs that read codons beginning with uridine, leading to the formation of N6-(dimethylallyl)adenosine (i(6)A). This chain is tRNA dimethylallyltransferase (miaA), found in Helicobacter acinonychis (strain Sheeba).